Reading from the N-terminus, the 357-residue chain is Thiamine thiazole synthase 1, chloroplastic (357 aa).

Residues 1–51 constitute a chloroplast transit peptide; the sequence is MSISAAGVATGLGANVELKSNVGSSSSSVAGVRLFTSRKAQLRRCAAPATS. Substrate contacts are provided by residues Ala103, 123–124, Gly131, and Ala196; that span reads EQ. Cys225 bears the 2,3-didehydroalanine (Cys) mark. Residues Asp227, His242, Met294, and 304 to 306 contribute to the substrate site; that span reads RMG.

This sequence belongs to the THI4 family. In terms of assembly, homooctamer. The cofactor is Fe cation. In terms of processing, during the catalytic reaction, a sulfide is transferred from Cys-225 to a reaction intermediate, generating a dehydroalanine residue.

The protein localises to the plastid. The protein resides in the chloroplast. The catalysed reaction is [ADP-thiazole synthase]-L-cysteine + glycine + NAD(+) = [ADP-thiazole synthase]-dehydroalanine + ADP-5-ethyl-4-methylthiazole-2-carboxylate + nicotinamide + 3 H2O + 2 H(+). Functionally, involved in biosynthesis of the thiamine precursor thiazole. Catalyzes the conversion of NAD and glycine to adenosine diphosphate 5-(2-hydroxyethyl)-4-methylthiazole-2-carboxylic acid (ADT), an adenylated thiazole intermediate. The reaction includes an iron-dependent sulfide transfer from a conserved cysteine residue of the protein to a thiazole intermediate. The enzyme can only undergo a single turnover, which suggests it is a suicide enzyme. May have additional roles in adaptation to various stress conditions and in DNA damage tolerance. The protein is Thiamine thiazole synthase 1, chloroplastic of Physcomitrium patens (Spreading-leaved earth moss).